We begin with the raw amino-acid sequence, 338 residues long: Tripartite motif-containing protein 44 (338 aa).

2 disordered regions span residues 1–25 and 72–162; these read MASGGGAAFEELPHDGTCDECEPDE and ARGD…EFDP. Residues 95–162 are compositionally biased toward acidic residues; sequence EAGEGIESEE…ETEAESEFDP (68 aa). Positions 109-153 form a coiled coil; it reads EEESETEEESEDESEEDSEEEMEDEQESEAEEDNQEEGESEAEGE. The B box-type zinc-finger motif lies at 171–212; that stretch reads VAKRKCPDHGLDLSTYCQEDKQLICVLCPVIGAHHGHHLSTL. Zn(2+) contacts are provided by cysteine 176, histidine 179, cysteine 198, and histidine 204. Residues 257–322 adopt a coiled-coil conformation; the sequence is QQEFKKVQKV…QLDTSNESAE (66 aa). The tract at residues 307–338 is disordered; that stretch reads MAQAKEQLDTSNESAEPKAEGDEEEPGGTDED. The span at 327-338 shows a compositional bias: acidic residues; sequence GDEEEPGGTDED.

In terms of assembly, interacts (via coiled coil) with TRIM17 (via coiled coil).

In terms of biological role, may play a role in the process of differentiation and maturation of neuronal cells. May regulate the activity of TRIM17. Is a negative regulator of PAX6 expression. This is Tripartite motif-containing protein 44 (TRIM44) from Bos taurus (Bovine).